The primary structure comprises 211 residues: Uracil phosphoribosyltransferase (211 aa).

Residues R79, R104, and 131-139 each bind 5-phospho-alpha-D-ribose 1-diphosphate; that span reads DPMLATGGS. Uracil contacts are provided by residues I196 and 201–203; that span reads GDA. Residue D202 coordinates 5-phospho-alpha-D-ribose 1-diphosphate.

This sequence belongs to the UPRTase family. It depends on Mg(2+) as a cofactor.

It carries out the reaction UMP + diphosphate = 5-phospho-alpha-D-ribose 1-diphosphate + uracil. The protein operates within pyrimidine metabolism; UMP biosynthesis via salvage pathway; UMP from uracil: step 1/1. Allosterically activated by GTP. Functionally, catalyzes the conversion of uracil and 5-phospho-alpha-D-ribose 1-diphosphate (PRPP) to UMP and diphosphate. The polypeptide is Uracil phosphoribosyltransferase (Limosilactobacillus reuteri (strain DSM 20016) (Lactobacillus reuteri)).